Here is a 204-residue protein sequence, read N- to C-terminus: Small ribosomal subunit protein uS4 (204 aa).

The disordered stretch occupies residues 21–45 (GRPKSPINKREYGPGQHGQRRKKPS). Residues 93 to 156 (RRLDAVVYRM…KQLAMVLDSV (64 aa)) form the S4 RNA-binding domain.

It belongs to the universal ribosomal protein uS4 family. As to quaternary structure, part of the 30S ribosomal subunit. Contacts protein S5. The interaction surface between S4 and S5 is involved in control of translational fidelity.

In terms of biological role, one of the primary rRNA binding proteins, it binds directly to 16S rRNA where it nucleates assembly of the body of the 30S subunit. Functionally, with S5 and S12 plays an important role in translational accuracy. The sequence is that of Small ribosomal subunit protein uS4 from Acidiphilium cryptum (strain JF-5).